We begin with the raw amino-acid sequence, 813 residues long: Raf homolog serine/threonine-protein kinase (813 aa).

Positions Met1 to Pro79 are disordered. Residues Ser9–Pro23 show a composition bias toward low complexity. Residues Lys85–Glu161 enclose the RBD domain. Residues Lys170–Cys217 form a Phorbol-ester/DAG-type zinc finger. Residues Cys184, Cys187, Cys198, Cys201, His206, Cys209, and Cys217 each contribute to the Zn(2+) site. Polar residues-rich tracts occupy residues Thr258–Asp273 and Ser291–Pro301. Disordered stretches follow at residues Thr258–Asn315, Gln338–His358, and Thr383–Glu472. Over residues Gln338 to Thr348 the composition is skewed to basic and acidic residues. The span at Gly386–Gly399 shows a compositional bias: low complexity. A compositionally biased stretch (polar residues) spans Thr406 to Leu421. Residues Ser453–Arg462 are compositionally biased toward basic and acidic residues. In terms of domain architecture, Protein kinase spans Phe481–Leu748. ATP contacts are provided by residues Val487–Val495 and Lys507. Catalysis depends on Asp602, which acts as the Proton acceptor.

This sequence belongs to the protein kinase superfamily. TKL Ser/Thr protein kinase family. RAF subfamily. As to quaternary structure, interacts with cdf-1 in a zinc-dependent manner which promotes its activity. Zn(2+) serves as cofactor.

It catalyses the reaction L-seryl-[protein] + ATP = O-phospho-L-seryl-[protein] + ADP + H(+). The catalysed reaction is L-threonyl-[protein] + ATP = O-phospho-L-threonyl-[protein] + ADP + H(+). Protein kinase that participates in the induction of vulva and has roles in fertility and viability. Acts downstream of the Ras protein let-60. Required for progression of developing oocytes through the pachytene stage. Plays a role in responses to M.nematophilum-mediated bacterial infection by promoting tail swelling and preventing constipation. Positively regulates lifespan upstream of mek-2 and mpk-1. The protein is Raf homolog serine/threonine-protein kinase (lin-45) of Caenorhabditis elegans.